A 265-amino-acid polypeptide reads, in one-letter code: Eukaryotic translation initiation factor 3 subunit J (265 aa).

Residues 24-34 (AGDEPILDSWD) show a composition bias toward acidic residues. The segment at 24-74 (AGDEPILDSWDEEPKAKKEAAKPKPKPKAGGKKNAKGEEKKEQVLAIDELD) is disordered. Positions 35 to 45 (EEPKAKKEAAK) are enriched in basic and acidic residues. Over residues 46–57 (PKPKPKAGGKKN) the composition is skewed to basic residues. 2 coiled-coil regions span residues 78–106 (RKELMKKAELESDLNNAADLLGDLEMAEE) and 190–220 (IENIRQTVATLNILIKDKEKAERQARLARVK).

This sequence belongs to the eIF-3 subunit J family. Component of the eukaryotic translation initiation factor 3 (eIF-3) complex.

It is found in the cytoplasm. In terms of biological role, component of the eukaryotic translation initiation factor 3 (eIF-3) complex, which is involved in protein synthesis of a specialized repertoire of mRNAs and, together with other initiation factors, stimulates binding of mRNA and methionyl-tRNAi to the 40S ribosome. The eIF-3 complex specifically targets and initiates translation of a subset of mRNAs involved in cell proliferation. The chain is Eukaryotic translation initiation factor 3 subunit J from Candida glabrata (strain ATCC 2001 / BCRC 20586 / JCM 3761 / NBRC 0622 / NRRL Y-65 / CBS 138) (Yeast).